A 1149-amino-acid polypeptide reads, in one-letter code: Protein deacetylase HDAC6 (1149 aa).

A disordered region spans residues 1–61 (MTSTGQDSST…KGKMKKLSQP (61 aa)). Positions 18-29 (NPQSPLQESSAT) are enriched in polar residues. Position 21 is a phosphoserine (Ser21). Residue Arg32 is modified to Omega-N-methylarginine. Ser43 carries the phosphoserine modification. The short motif at 66 to 75 (LVVGLQGLDL) is the Nuclear export signal element. Histone deacetylase stretches follow at residues 87–403 (LVFD…TLLG) and 481–799 (GLVY…SLLG). Catalysis depends on His215, which acts as the 1. The active-site 2 is the His610. The tract at residues 954-975 (ALGETEPTPPASHTNKQTTGAS) is disordered. Phosphothreonine is present on residues Thr958, Thr961, Thr967, and Thr971. The segment covering 964 to 975 (ASHTNKQTTGAS) has biased composition (polar residues). Ser975 is modified (phosphoserine). A UBP-type zinc finger spans residues 1045–1143 (SWCPHLMAVC…NAAHQNKFGE (99 aa)). Positions 1047, 1049, 1067, 1070, 1079, 1082, and 1087 each coordinate Zn(2+). The interval 1088–1090 (SRY) is ubiquitin binding. Zn(2+)-binding residues include His1094, His1098, His1104, Cys1117, and Cys1120. The ubiquitin binding stretch occupies residues 1116 to 1123 (WCYVCQAY). Position 1148 is a phosphoserine (Ser1148).

Belongs to the histone deacetylase family. HD type 2 subfamily. In terms of assembly, forms a trimeric complex in the nucleus consisting of BANP, HDAC6 and KHDRBS1/SAM68; HDAC6 keeps KHDRBS1 in a deacetylated state which inhibits the inclusion of CD44 alternate exons. The complex is disrupted by MAPK1/MAPK3-mediated phosphorylation of BANP which results in BANP export to the cytoplasm. This facilitates acetylation of KHDRBS1 and CD44 variant exon inclusion. Interacts with SIRT2 (via both phosphorylated, unphosphorylated, active or inactive forms); the interaction is necessary for the complex to interact with alpha-tubulin. Under proteasome impairment conditions, interacts with UBD via its histone deacetylase 1 and UBP-type zinc-finger regions. Interacts with BBIP1, CBFA2T3, CYLD, DDIT3/CHOP, ZMYND15, F-actin and HDAC11. Interacts with RIPOR2; this interaction occurs during early myogenic differentiation and prevents HDAC6 to deacetylate tubulin. Interacts with AURKA; AURKA-mediated phosphorylation of HDAC6 promotes deacetylation of alpha-tubulin. Interacts with DYSF; this interaction occurs during early myogenic differentiation. Interacts with TPPP; inhibiting the tubulin deacetylase activity of HDAC6. Interacts with DYNLL1. Interacts with ATP13A2; the interaction results in recruitment of HDAC6 to lysosomes to promote CTTN deacetylation. Interacts with CCDC141 (via the N-terminal region); inhibiting the deacetylase activity of HDAC6. Interacts with IPO7; the interaction facilitates HDAC6 nuclear translocation in dental papilla cells. The cofactor is Zn(2+). In terms of processing, phosphorylated by AURKA; phosphorylation increases HDAC6-mediated deacetylation of alpha-tubulin and subsequent disassembly of cilia. Ubiquitinated. Its polyubiquitination however does not lead to its degradation. Post-translationally, sumoylated in vitro. As to expression, expressed in neurons of the cortex. Expressed in Purkinje cells. Detected in keratinocytes (at protein level).

The protein resides in the cytoplasm. It localises to the cytoskeleton. The protein localises to the nucleus. Its subcellular location is the perikaryon. It is found in the cell projection. The protein resides in the dendrite. It localises to the axon. The protein localises to the cilium. Its subcellular location is the microtubule organizing center. It is found in the centrosome. The protein resides in the cilium basal body. The enzyme catalyses N(6)-acetyl-L-lysyl-[protein] + H2O = L-lysyl-[protein] + acetate. It catalyses the reaction N(6)-acetyl-L-lysyl-[alpha-tubulin] + H2O = L-lysyl-[alpha-tubulin] + acetate. It functions in the pathway protein modification; protein ubiquitination. Deacetylates a wide range of non-histone substrates. Plays a central role in microtubule-dependent cell motility by mediating deacetylation of tubulin. Required for cilia disassembly via deacetylation of alpha-tubulin. Alpha-tubulin deacetylation results in destabilization of dynamic microtubules. Promotes deacetylation of CTTN, leading to actin polymerization, promotion of autophagosome-lysosome fusion and completion of autophagy. Deacetylates SQSTM1. Deacetylates peroxiredoxins PRDX1 and PRDX2, decreasing their reducing activity. Deacetylates antiviral protein RIGI in the presence of viral mRNAs which is required for viral RNA detection by RIGI. Sequentially deacetylates and polyubiquitinates DNA mismatch repair protein MSH2 which leads to MSH2 degradation, reducing cellular sensitivity to DNA-damaging agents and decreasing cellular DNA mismatch repair activities. Deacetylates DNA mismatch repair protein MLH1 which prevents recruitment of the MutL alpha complex (formed by the MLH1-PMS2 heterodimer) to the MutS alpha complex (formed by the MSH2-MSH6 heterodimer), leading to tolerance of DNA damage. Deacetylates RHOT1/MIRO1 which blocks mitochondrial transport and mediates axon growth inhibition. Deacetylates transcription factor SP1 which leads to increased expression of ENG, positively regulating angiogenesis. Deacetylates KHDRBS1/SAM68 which regulates alternative splicing by inhibiting the inclusion of CD44 alternate exons. Promotes odontoblast differentiation following IPO7-mediated nuclear import and subsequent repression of RUNX2 expression. In addition to its protein deacetylase activity, plays a key role in the degradation of misfolded proteins: when misfolded proteins are too abundant to be degraded by the chaperone refolding system and the ubiquitin-proteasome, mediates the transport of misfolded proteins to a cytoplasmic juxtanuclear structure called aggresome. Probably acts as an adapter that recognizes polyubiquitinated misfolded proteins and target them to the aggresome, facilitating their clearance by autophagy. The polypeptide is Protein deacetylase HDAC6 (Mus musculus (Mouse)).